The primary structure comprises 148 residues: Snaclec 27 (148 aa).

The first 23 residues, 1-23 (WGDSSSSASACWSCFSLVSGIGA), serve as a signal peptide directing secretion. 3 disulfide bridges follow: cysteine 27–cysteine 38, cysteine 55–cysteine 144, and cysteine 121–cysteine 136. Residues 34–145 (HEGHCYKVFS…CSSTQQFVCK (112 aa)) form the C-type lectin domain.

This sequence belongs to the snaclec family. In terms of assembly, heterodimer; disulfide-linked. In terms of tissue distribution, expressed by the venom gland.

The protein localises to the secreted. Its function is as follows. Interferes with one step of hemostasis (modulation of platelet aggregation, or coagulation cascade, for example). The sequence is that of Snaclec 27 from Echis ocellatus (Ocellated saw-scaled viper).